The chain runs to 280 residues: UPF0276 protein CC_3255 (280 aa).

This sequence belongs to the UPF0276 family.

The protein is UPF0276 protein CC_3255 of Caulobacter vibrioides (strain ATCC 19089 / CIP 103742 / CB 15) (Caulobacter crescentus).